The sequence spans 423 residues: MSKNCPECGSSRVVEDDLYSQKQWVCEDCGSVVSEGLLTTTLSEESHSRAVPFFTSTAAFKKPCRNLVSGFSRLRALCRIFRLSSSMEDASANLFERAYNHPNFLHISLSKKQILAGCCMFHICRQNSWPVFMGTIGYLLDADNYQMGTIYQELTKSLNLQTTQVCITRMLESFCYDFKLAPDEVEEVFSVAQQRLVDQTSALLELAADTWILTGRRPFPLFLAAVYVAWQSLNPLARMKYSLMKFCKIAKAPEQLWCKSKDTINKRLNELLEVLCKLGRELPWVRPTDIQMNTVTTLVEDILKHRKALLILAVKHYEKQLEETQTSQYSESELSDSKSSVQTQCKSPPDEEDEGCELPPDHWGKRHLFLPPCVRTQKRQKINEAPLEVTGDEDISDSEIESYIRSEEEIKLFAKARKKICKY.

Residues 1-34 form a TFIIB-type zinc finger; sequence MSKNCPECGSSRVVEDDLYSQKQWVCEDCGSVVS. Zn(2+) contacts are provided by cysteine 5, cysteine 8, cysteine 26, and cysteine 29. Repeat unit 2 spans residues 171-245; sequence LESFCYDFKL…LARMKYSLMK (75 aa). Low complexity predominate over residues 325-340; the sequence is QTSQYSESELSDSKSS. Residues 325 to 358 are disordered; it reads QTSQYSESELSDSKSSVQTQCKSPPDEEDEGCEL. Cysteine 373 carries the post-translational modification Cysteine sulfenic acid (-SOH).

Belongs to the TFIIB family. In terms of assembly, component of TFIIIB complexes. Interacts with TBP and forms a ternary complex with TBp and target DNA sequences. In terms of processing, in response to oxidative stress, a Cys-residue is reversibly oxidized to cysteine sulfenic acid. This impairs formation of a ternary complex with TBP and DNA and down-regulates expression of target genes in response to oxidative stress.

The protein resides in the nucleus. General activator of RNA polymerase III transcription. Factor exclusively required for RNA polymerase III transcription of genes with promoter elements upstream of the initiation sites. Contributes to the regulation of gene expression; functions as activator in the absence of oxidative stress. Down-regulates expression of target genes in response to oxidative stress. Overexpression protects cells against apoptosis in response to oxidative stress. This Danio rerio (Zebrafish) protein is Transcription factor IIIB 50 kDa subunit (brf2).